A 53-amino-acid chain; its full sequence is UPF0391 membrane protein ECA0470 (53 aa).

2 helical membrane passes run 4–24 and 30–47; these read WGII…GGLA and AAKI…VSLF.

Belongs to the UPF0391 family.

It is found in the cell membrane. The sequence is that of UPF0391 membrane protein ECA0470 from Pectobacterium atrosepticum (strain SCRI 1043 / ATCC BAA-672) (Erwinia carotovora subsp. atroseptica).